The chain runs to 831 residues: Sodium/hydrogen exchanger 3 (831 aa).

The first 28 residues, 1-28, serve as a signal peptide directing secretion; it reads MWHPALGPGWKPLLALALALTSLRGVRG. Residues 29–48 lie on the Extracellular side of the membrane; sequence IEEEPNSGGSFQIVTFKWHH. The chain crosses the membrane as a helical span at residues 49-71; it reads VQDPYIIALWILVASLAKIVFHL. Over 72–79 the chain is Cytoplasmic; it reads SHKVTSVV. A helical transmembrane segment spans residues 80–99; the sequence is PESALLIVLGLVLGGIVWAA. Residues 100–108 are Extracellular-facing; sequence DHIASFTLT. A helical transmembrane segment spans residues 109-126; that stretch reads PTLFFFYLLPPIVLDAGY. Residues 127–129 are Cytoplasmic-facing; the sequence is FMP. The chain crosses the membrane as a helical span at residues 130–165; sequence NRLFFGNLGTILLYAVIGTIWNAATTGLSLYGVFLS. Positions 135, 138, and 139 each coordinate a 1,2-diacyl-sn-glycero-3-phospho-(1D-myo-inositol). Topologically, residues 166–178 are extracellular; that stretch reads GLMGELKIGLLDF. Residues 179-200 form a helical membrane-spanning segment; the sequence is LLFGSLIAAVDPVAVLAVFEEV. The Cytoplasmic segment spans residues 201-202; that stretch reads HV. The chain crosses the membrane as a helical span at residues 203-234; sequence NEVLFIIVFGESLLNDAVTVVLYNVFESFVTL. Residues 235 to 241 lie on the Extracellular side of the membrane; that stretch reads GGDAVTG. The chain crosses the membrane as a helical span at residues 242 to 276; it reads VDCVKGIVSFFVVSLGGTLVGVIFAFLLSLVTRFT. Residues 277–278 lie on the Cytoplasmic side of the membrane; that stretch reads KH. The helical transmembrane segment at 279-301 threads the bilayer; it reads VRIIEPGFVFVISYLSYLTSEML. Topologically, residues 302–303 are extracellular; the sequence is SL. The helical transmembrane segment at 304 to 320 threads the bilayer; sequence SAILAITFCGICCQKYV. The Cytoplasmic segment spans residues 321 to 327; the sequence is KANISEQ. A helical transmembrane segment spans residues 328-356; sequence SATTVRYTMKMLASGAETIIFMFLGISAV. At 357–364 the chain is on the extracellular side; the sequence is DPVIWTWN. Residues 365–386 traverse the membrane as a helical segment; that stretch reads TAFVLLTLVFISVYRAIGVVLQ. The Cytoplasmic portion of the chain corresponds to 387-399; the sequence is TWILNRYRMVQLE. Position 395 (methionine 395) interacts with a 1,2-diacyl-sn-glycero-3-phospho-(1D-myo-inositol). A helical membrane pass occupies residues 400–423; sequence TIDQVVMSYGGLRGAVAYALVVLL. The Extracellular portion of the chain corresponds to 424-430; that stretch reads DEKKVKE. A helical transmembrane segment spans residues 431-464; that stretch reads KNLFVSTTLIVVFFTVIFQGLTIKPLVQWLKVKR. The Cytoplasmic portion of the chain corresponds to 465–831; sequence SEQREPKLNE…QPASPESTHM (367 aa). Residues glutamine 494, isoleucine 495, and histidine 497 each contribute to the a 1,2-diacyl-sn-glycero-3-phospho-(1D-myo-inositol) site. Serine 552 and serine 560 each carry phosphoserine. The interval 573–587 is interaction with EZR; the sequence is RPSTVEASVSYFLRE. Residues 588 to 665 form an interaction with NHERF4 region; it reads NVSAVCLDMQ…RKRLESFKSA (78 aa). Positions 589–693 are interaction with AHCYL1; sequence VSAVCLDMQS…AQKRRNSSIP (105 aa). A phosphoserine mark is found at serine 590 and serine 605. The residue at position 661 (serine 661) is a Phosphoserine; by SGK1. A phosphoserine mark is found at serine 716, serine 807, and serine 810. The disordered stretch occupies residues 808 to 831; it reads VDSFLQADGPEEQLQPASPESTHM. The span at 822–831 shows a compositional bias: polar residues; that stretch reads QPASPESTHM.

Belongs to the monovalent cation:p,roton antiporter 1 (CPA1) transporter (TC 2.A.36) family. As to quaternary structure, homodimer. Found in the forms of complex and dynamic macromolecular complexes. Binds NHERF1 and NHERF2. Interacts with NHERF4 and interactions decrease in response to elevated calcium ion levels. Interacts with PDZK1 (via C-terminal PDZ domain). Interacts with CHP1; this interaction increases trafficking and activity at the plasma membrane of SLC9A3. Interacts with CHP2 and SHANK2. Interacts with AHCYL1; the interaction is required for SLC9A3 activity. Interacts with EZR; interaction targets SLC9A3 to the apical membrane. Interacts with SNX27 (via PDZ domains); directs SLC9A3 membrane insertion from early endosomes to the plasma membrane. In terms of processing, phosphorylated by PRKACA at Ser-552 and Ser-605, which inhibits activity. Phosphorylation of Ser-605 is essential for cAMP-mediated inhibition of SLC9A3. Phosphorylation at Ser-661 by SGK1 is associated with increased abundance at the cell membrane. Phosphorylation at Ser-716 by CSNK2A1 regulates SLC9A3 activity through the formation of multiple signaling complexes. As to expression, most abundant in colon and small intestine, followed by kidney and stomach. In kidney, expressed in proximal tubules and outer medulla (at protein level).

It localises to the apical cell membrane. It is found in the cell membrane. Its subcellular location is the recycling endosome membrane. The protein localises to the early endosome membrane. It catalyses the reaction Na(+)(in) + H(+)(out) = Na(+)(out) + H(+)(in). Its activity is regulated as follows. Seems to switch between active and inactive modes in response to various stimuli. Activated directly or indirectly by membrane phosphatidylinositol (PIs). Regulated by a variety of auxiliary proteins, which facilitate the maturation, cell surface expression and function of the transporter. Inhibited specifically by the drug tenapanor. In terms of biological role, plasma membrane Na(+)/H(+) antiporter. Exchanges intracellular H(+) ions for extracellular Na(+) in 1:1 stoichiometry, playing a key role in salt and fluid absorption and pH homeostasis. Major apical Na(+)/H(+) exchanger in kidney and intestine playing an important role in renal and intestine Na(+) absorption and blood pressure regulation. The chain is Sodium/hydrogen exchanger 3 (Slc9a3) from Rattus norvegicus (Rat).